A 457-amino-acid polypeptide reads, in one-letter code: uncharacterized protein (457 aa).

Residues 10-69 (ALLQGQTVTVPITALAAGGDGIARLTDGRVLFVAGAVPGDTVEARLVHLKKDHGFGKILQ) form the TRAM domain. [4Fe-4S] cluster-binding residues include C82, C88, C91, and C170. Positions 294, 323, 344, and 387 each coordinate S-adenosyl-L-methionine. The active-site Nucleophile is C414.

It belongs to the class I-like SAM-binding methyltransferase superfamily. RNA M5U methyltransferase family.

This is an uncharacterized protein from Gloeobacter violaceus (strain ATCC 29082 / PCC 7421).